An 80-amino-acid polypeptide reads, in one-letter code: uncharacterized protein (80 aa).

An N-terminal signal peptide occupies residues 1–23 (MKWNNMLKAAGIAVLLFSVFAYA).

This is an uncharacterized protein from Bacillus subtilis (strain 168).